Here is a 501-residue protein sequence, read N- to C-terminus: ATP synthase subunit alpha (501 aa).

169–176 (GDRQTGKT) is an ATP binding site.

The protein belongs to the ATPase alpha/beta chains family. In terms of assembly, F-type ATPases have 2 components, CF(1) - the catalytic core - and CF(0) - the membrane proton channel. CF(1) has five subunits: alpha(3), beta(3), gamma(1), delta(1), epsilon(1). CF(0) has three main subunits: a(1), b(2) and c(9-12). The alpha and beta chains form an alternating ring which encloses part of the gamma chain. CF(1) is attached to CF(0) by a central stalk formed by the gamma and epsilon chains, while a peripheral stalk is formed by the delta and b chains.

It is found in the cell membrane. It carries out the reaction ATP + H2O + 4 H(+)(in) = ADP + phosphate + 5 H(+)(out). In terms of biological role, produces ATP from ADP in the presence of a proton gradient across the membrane. The alpha chain is a regulatory subunit. This is ATP synthase subunit alpha from Streptococcus pneumoniae (strain Hungary19A-6).